The following is a 206-amino-acid chain: ATP phosphoribosyltransferase (206 aa).

It belongs to the ATP phosphoribosyltransferase family. Short subfamily. Heteromultimer composed of HisG and HisZ subunits.

Its subcellular location is the cytoplasm. The enzyme catalyses 1-(5-phospho-beta-D-ribosyl)-ATP + diphosphate = 5-phospho-alpha-D-ribose 1-diphosphate + ATP. It participates in amino-acid biosynthesis; L-histidine biosynthesis; L-histidine from 5-phospho-alpha-D-ribose 1-diphosphate: step 1/9. Functionally, catalyzes the condensation of ATP and 5-phosphoribose 1-diphosphate to form N'-(5'-phosphoribosyl)-ATP (PR-ATP). Has a crucial role in the pathway because the rate of histidine biosynthesis seems to be controlled primarily by regulation of HisG enzymatic activity. This chain is ATP phosphoribosyltransferase, found in Geobacillus sp. (strain WCH70).